We begin with the raw amino-acid sequence, 1484 residues long: MYSEWRSLHLVIQNDQGHTSVLHSYPESVGREVANAVVRPLGQALGHSPVSASQSLLYTDKDVKWTMEVICYGLTLPLDGETVKYCVDVYTDWIMALVLPKDSIPLPVIKEPNLYIQSILKHLQNLFVPRQEQGSSQIRLCLQVLRAIQKLARESSIMARETWEVLLLFLLQINDILLAPPTVQGGIAENLAEKLIGVLFEVWLLACTRCFPTPPYWKTAKEMVANWRHHPAVVEQWSKVICALTSRLLRFTYGPSFPPFKVPDEDANLIPPEMDNECIAQTWFRFLHMLSNPVDLSNPAVISSTPKFQEQFLNVSGMPQELSQYPCLKHLPQIFFRAMRGISCLVDAFLGISRPRSDSAPPTPVNRLSMPQSAAVNTTPPHNRRHRAVTVNKATMKTSTVTTAHTSKVQHQASSTSPLSSPNQTSSEPRPLPAPRRPKVNSILNLFGSWLFDAAFVHCKLHNGINRDSSMTASFIQILLSYKSSIATQASMEFRRKGSQMSTDTMVSNPVFDASEFPDNYEAGRAEACGTLCRIFCSKKTGEEILPAYLSSVILNSPPLFCCDLKGIDVVVPYFISALETILPDRELSKFKSYVNPTELRRSSINILLSLLPLPHHFGTVRSEVVLEGKFSNDDSSSYDKPITFLSLKLRLVNILIGALQTETDPNNTQMILGAMLNIVQDSALLEALGCQMEMGGGENNLKSHSRTNSGISSASGGSTEPTTPDSERPAQALLRDYGSTDSAAGLLIRSIHLVTQRLNSQWRQDMSISLAALELLSGLAKVKVMVDLGDRKRAISSVCSYIVYQCSRPAPLHSRDLHSMIVAAFQCLCVWLTEHPDMLDEKDCLKEVLEIVELGISGSKSKNSEQEVKYKGDKEPNPASMRVKDAAEATLTCIMQLLGAFPSPSGPASPCSLVNETTLIKYSRLPTINKHSFRYFVLDNSVILAMLEQPLGNEQNDFFPSVTVLVRGMSGRLAWAQQLCLLPRGAKANQKLFVPEPRPVPKNDVGFKYSVKHRPFPEEVDKIPFVKADLSIPDLHEIVTEELEERHEKLRSGMAQQIAYEMHLEQQSEGELQKRSFPDPVTDCKPPPPAQEFQTARLFLSHFGFLSLEALKEPANSRLPPHLIALDSTIPGFFDDIGYLDLLPCRPFDTVFIFYMKPGQKTNQEILKNVESSRNVQPHFLEFLLSLGWSVDVGRHPGWTGHVSTSWSINSCDDGEGSEQDEVTSSEDVGASIFNGQKKVLYYADALTEIAFVVPSPVESLTDSLESNISDQDSDSNMDLMPGILKQPPLTLELVPNHTDSLNSSQRLSPSSRMKKLPQGRPVPPLGPETRVSVVWVERYDDIENFPLSDLMTEISTGVETTANSSTSLRSTTLEKEVPVIFIHPLNTGLFRIKIQGATGKFNMVIPLVDGMIVSRRALGFLVRQTVINICRRKRLESDSYSPPHVRRKQKITDIVNKYRNKQLEPEFYTALFQEVGLKNCSS.

Disordered stretches follow at residues 355 to 437 (PRSD…APRR) and 697 to 728 (GGEN…PDSE). Ser-359 carries the post-translational modification Phosphoserine. Phosphothreonine occurs at positions 363 and 379. Polar residues-rich tracts occupy residues 369 to 381 (SMPQ…TTPP), 392 to 428 (NKAT…TSSE), and 701 to 725 (NLKS…PTTP). Residues Ser-421 and Ser-710 each carry the phosphoserine modification. Thr-724 bears the Phosphothreonine mark. The Rap-GAP domain maps to 1138–1382 (IGYLDLLPCR…TTLEKEVPVI (245 aa)). At Ser-1275 the chain carries Phosphoserine. Positions 1301-1325 (DSLNSSQRLSPSSRMKKLPQGRPVP) are disordered. Residues 1302 to 1313 (SLNSSQRLSPSS) show a composition bias toward low complexity.

In terms of assembly, component of the heterodimeric RalGAP1 complex with RALGAPA1 and of the heterodimeric RalGAP2 complex with RALGAPA2. Heterodimerization is required for activity. As to expression, detected in brain, thymus, lung, heart, spleen, liver and testis (at protein level).

In terms of biological role, non-catalytic subunit of the heterodimeric RalGAP1 and RalGAP2 complexes which act as GTPase activators for the Ras-like small GTPases RALA and RALB. The protein is Ral GTPase-activating protein subunit beta of Rattus norvegicus (Rat).